The sequence spans 404 residues: Glucose-1-phosphate adenylyltransferase (404 aa).

Alpha-D-glucose 1-phosphate contacts are provided by residues Tyr99, Gly164, 179 to 180 (EK), and Ser197.

Belongs to the bacterial/plant glucose-1-phosphate adenylyltransferase family.

It carries out the reaction alpha-D-glucose 1-phosphate + ATP + H(+) = ADP-alpha-D-glucose + diphosphate. It functions in the pathway glycan biosynthesis; glycogen biosynthesis. Involved in the biosynthesis of ADP-glucose, a building block, required in the biosynthesis of maltose-1-phosphate (M1P) and in the elongation reactions to produce linear alpha-1,4-glucans. Catalyzes the reaction between ATP and alpha-D-glucose 1-phosphate (G1P) to produce pyrophosphate and ADP-Glc. This chain is Glucose-1-phosphate adenylyltransferase, found in Mycolicibacterium gilvum (strain PYR-GCK) (Mycobacterium gilvum (strain PYR-GCK)).